A 126-amino-acid polypeptide reads, in one-letter code: Small ribosomal subunit protein uS13 (126 aa).

A disordered region spans residues 94-126 (GLPVRGQKTRNNAHTVKGKPKAAIAGKKKNKVN). Over residues 109–126 (VKGKPKAAIAGKKKNKVN) the composition is skewed to basic residues.

The protein belongs to the universal ribosomal protein uS13 family. In terms of assembly, part of the 30S ribosomal subunit. Forms a loose heterodimer with protein S19. Forms two bridges to the 50S subunit in the 70S ribosome.

Its function is as follows. Located at the top of the head of the 30S subunit, it contacts several helices of the 16S rRNA. In the 70S ribosome it contacts the 23S rRNA (bridge B1a) and protein L5 of the 50S subunit (bridge B1b), connecting the 2 subunits; these bridges are implicated in subunit movement. Contacts the tRNAs in the A and P-sites. In Aster yellows witches'-broom phytoplasma (strain AYWB), this protein is Small ribosomal subunit protein uS13.